Consider the following 99-residue polypeptide: Acylphosphatase (99 aa).

Positions 11 to 97 (ARRIHVKGKV…VVAQGFTQKP (87 aa)) constitute an Acylphosphatase-like domain. Residues Arg-26 and Asn-44 contribute to the active site.

The protein belongs to the acylphosphatase family.

It carries out the reaction an acyl phosphate + H2O = a carboxylate + phosphate + H(+). This Rhizorhabdus wittichii (strain DSM 6014 / CCUG 31198 / JCM 15750 / NBRC 105917 / EY 4224 / RW1) (Sphingomonas wittichii) protein is Acylphosphatase (acyP).